Reading from the N-terminus, the 218-residue chain is Small ribosomal subunit protein uS3c (218 aa).

In terms of domain architecture, KH type-2 spans 47–118 (VQKHMRVSSG…RLNIAITRVA (72 aa)).

It belongs to the universal ribosomal protein uS3 family. As to quaternary structure, part of the 30S ribosomal subunit.

It localises to the plastid. Its subcellular location is the chloroplast. The chain is Small ribosomal subunit protein uS3c (rps3) from Illicium oligandrum (Star anise).